The primary structure comprises 244 residues: Transcriptional activator protein CarR (244 aa).

In terms of domain architecture, HTH luxR-type spans Asp162–Asn227. Residues Tyr186–Asn205 constitute a DNA-binding region (H-T-H motif).

The protein belongs to the autoinducer-regulated transcriptional regulatory protein family.

Its function is as follows. Functions as an OHLL responsive transcriptional regulator which acts in the control of the biosynthesis of carbapenem antibiotics. In Pectobacterium carotovorum subsp. carotovorum (Erwinia carotovora subsp. carotovora), this protein is Transcriptional activator protein CarR (carR).